Here is a 384-residue protein sequence, read N- to C-terminus: Putative glycosyltransferase EpsF (384 aa).

Belongs to the glycosyltransferase group 1 family. Glycosyltransferase 4 subfamily.

Its function is as follows. May be involved in the production of the exopolysaccharide (EPS) component of the extracellular matrix during biofilm formation. EPS is responsible for the adhesion of chains of cells into bundles. Required for biofilm maintenance. The sequence is that of Putative glycosyltransferase EpsF (epsF) from Bacillus subtilis (strain 168).